A 236-amino-acid chain; its full sequence is Enolase-phosphatase E1 (236 aa).

This sequence belongs to the HAD-like hydrolase superfamily. MasA/MtnC family. Monomer. It depends on Mg(2+) as a cofactor.

The enzyme catalyses 5-methylsulfanyl-2,3-dioxopentyl phosphate + H2O = 1,2-dihydroxy-5-(methylsulfanyl)pent-1-en-3-one + phosphate. The protein operates within amino-acid biosynthesis; L-methionine biosynthesis via salvage pathway; L-methionine from S-methyl-5-thio-alpha-D-ribose 1-phosphate: step 3/6. It functions in the pathway amino-acid biosynthesis; L-methionine biosynthesis via salvage pathway; L-methionine from S-methyl-5-thio-alpha-D-ribose 1-phosphate: step 4/6. Its function is as follows. Bifunctional enzyme that catalyzes the enolization of 2,3-diketo-5-methylthiopentyl-1-phosphate (DK-MTP-1-P) into the intermediate 2-hydroxy-3-keto-5-methylthiopentenyl-1-phosphate (HK-MTPenyl-1-P), which is then dephosphorylated to form the acireductone 1,2-dihydroxy-3-keto-5-methylthiopentene (DHK-MTPene). The chain is Enolase-phosphatase E1 from Frankia alni (strain DSM 45986 / CECT 9034 / ACN14a).